A 271-amino-acid chain; its full sequence is Probable WRKY transcription factor 69 (271 aa).

Disordered regions lie at residues 1–47 (MHRR…NVEK) and 130–166 (PSSS…TVTA). A compositionally biased stretch (acidic residues) spans 9–18 (ESDDEEDETY). Residues 64 to 130 (GEVYPPSDSW…YACDHNHPFP (67 aa)) constitute a DNA-binding region (WRKY).

The protein belongs to the WRKY group II-e family.

It is found in the nucleus. Its function is as follows. Transcription factor. Interacts specifically with the W box (5'-(T)TGAC[CT]-3'), a frequently occurring elicitor-responsive cis-acting element. The protein is Probable WRKY transcription factor 69 (WRKY69) of Arabidopsis thaliana (Mouse-ear cress).